An 828-amino-acid chain; its full sequence is Periplasmic nitrate reductase (828 aa).

Positions 1-31 (MKLSRRSFMKANAVAAVAAAAGLSVPGVARA) form a signal peptide, tat-type signal. The 4Fe-4S Mo/W bis-MGD-type domain maps to 39–95 (IKWDKAPCRFCGTGCGVLVGTQQGRVVACQGDPDAPVNRGLNCIKGYFLPKIMYGKD). 4 residues coordinate [4Fe-4S] cluster: Cys46, Cys49, Cys53, and Cys81. Mo-bis(molybdopterin guanine dinucleotide) is bound by residues Lys83, Gln150, Asn175, Cys179, 212–219 (WGANMAEM), 243–247 (STYQH), 262–264 (QSD), Met372, Gln376, Asn482, 508–509 (SD), Lys531, Asp558, and 718–727 (TGRVLEHWHT). Residue Phe794 coordinates substrate. The Mo-bis(molybdopterin guanine dinucleotide) site is built by Asn802 and Lys819.

The protein belongs to the prokaryotic molybdopterin-containing oxidoreductase family. NasA/NapA/NarB subfamily. As to quaternary structure, component of the periplasmic nitrate reductase NapAB complex composed of NapA and NapB. The cofactor is [4Fe-4S] cluster. Requires Mo-bis(molybdopterin guanine dinucleotide) as cofactor. Post-translationally, predicted to be exported by the Tat system. The position of the signal peptide cleavage has not been experimentally proven.

It is found in the periplasm. It catalyses the reaction 2 Fe(II)-[cytochrome] + nitrate + 2 H(+) = 2 Fe(III)-[cytochrome] + nitrite + H2O. In terms of biological role, catalytic subunit of the periplasmic nitrate reductase complex NapAB. Receives electrons from NapB and catalyzes the reduction of nitrate to nitrite. This chain is Periplasmic nitrate reductase, found in Shigella boydii serotype 4 (strain Sb227).